Reading from the N-terminus, the 684-residue chain is Cleavage and polyadenylation specificity factor subunit 3 (684 aa).

Serine 2 carries the N-acetylserine modification. Histidine 71, histidine 73, aspartate 75, histidine 76, histidine 158, and aspartate 179 together coordinate Zn(2+). Residue histidine 396 is the Proton donor of the active site. Zn(2+) is bound at residue histidine 418. Residues lysine 462, lysine 465, and lysine 545 each participate in a glycyl lysine isopeptide (Lys-Gly) (interchain with G-Cter in SUMO) cross-link. Position 659 is a phosphoserine (serine 659). A Phosphothreonine modification is found at threonine 681.

The protein belongs to the metallo-beta-lactamase superfamily. RNA-metabolizing metallo-beta-lactamase-like family. CPSF3 subfamily. As to quaternary structure, component of the cleavage and polyadenylation specificity factor (CPSF) complex, composed of CPSF1, CPSF2, CPSF3, CPSF4 and FIP1L1. Interacts with CPSF2, CSTF2 and SYMPK. Interacts with TUT1; the interaction is direct and mediates the recruitment of the CPSF complex on the 3'UTR of pre-mRNAs. Interacts with WDR33. Interacts with ZC3H3. It depends on Zn(2+) as a cofactor. Post-translationally, sumoylated on Lys-462, Lys-465 and Lys-545, preferentially by SUMO3.

It is found in the nucleus. In terms of biological role, component of the cleavage and polyadenylation specificity factor (CPSF) complex that plays a key role in pre-mRNA 3'-end formation, recognizing the AAUAAA signal sequence and interacting with poly(A) polymerase and other factors to bring about cleavage and poly(A) addition. Has endonuclease activity, and functions as an mRNA 3'-end-processing endonuclease. Also involved in the histone 3'-end pre-mRNA processing. U7 snRNP-dependent protein that induces both the 3'-endoribonucleolytic cleavage of histone pre-mRNAs and acts as a 5' to 3' exonuclease for degrading the subsequent downstream cleavage product (DCP) of mature histone mRNAs. Cleavage occurs after the 5'-ACCCA-3' sequence in the histone pre-mRNA leaving a 3'hydroxyl group on the upstream fragment containing the stem loop (SL) and 5' phosphate on the downstream cleavage product (DCP) starting with CU nucleotides. The U7-dependent 5' to 3' exonuclease activity is processive and degrades the DCP RNA substrate even after complete removal of the U7-binding site. Binds to the downstream cleavage product (DCP) of histone pre-mRNAs and the cleaved DCP RNA substrate in a U7 snRNP dependent manner. Required for entering/progressing through S-phase of the cell cycle. Required for the selective processing of microRNAs (miRNAs) during embryonic stem cell differentiation via its interaction with ISY1. Required for the biogenesis of all miRNAs from the pri-miR-17-92 primary transcript except miR-92a. Only required for the biogenesis of miR-290 and miR-96 from the pri-miR-290-295 and pri-miR-96-183 primary transcripts, respectively. This Bos taurus (Bovine) protein is Cleavage and polyadenylation specificity factor subunit 3 (CPSF3).